The sequence spans 304 residues: D-alanine--D-alanine ligase (304 aa).

The 202-residue stretch at 100–301 (KLVALQSGIP…FGEFLEDLIK (202 aa)) folds into the ATP-grasp domain. 129-184 (ERKLGSPFIVKPCDVGSTIGLSLVRSASEYEVALEEAFRFSDRLLLEEFIDGFEVT) contributes to the ATP binding site. Aspartate 256, glutamate 268, and asparagine 270 together coordinate Mg(2+).

Belongs to the D-alanine--D-alanine ligase family. Requires Mg(2+) as cofactor. The cofactor is Mn(2+).

It localises to the cytoplasm. The catalysed reaction is 2 D-alanine + ATP = D-alanyl-D-alanine + ADP + phosphate + H(+). It functions in the pathway cell wall biogenesis; peptidoglycan biosynthesis. Cell wall formation. The chain is D-alanine--D-alanine ligase from Coprothermobacter proteolyticus (strain ATCC 35245 / DSM 5265 / OCM 4 / BT).